The primary structure comprises 213 residues: uncharacterized protein (213 aa).

Positions 53, 74, and 96 each coordinate S-adenosyl-L-methionine.

Belongs to the methyltransferase superfamily. YrrT family.

Functionally, could be a S-adenosyl-L-methionine-dependent methyltransferase. This is an uncharacterized protein from Oceanobacillus iheyensis (strain DSM 14371 / CIP 107618 / JCM 11309 / KCTC 3954 / HTE831).